We begin with the raw amino-acid sequence, 653 residues long: MQPWEYVYDLLMPAGTPIGEKQFTKYIYLTLAVPATKEFEEKISKGDTKDLELPVYPVAFNTKPAEFKGDRIATKKDLLTRSGLYDDDYDFEAPIKDLEFKSALVPGYFPLAVLKLYFEGDIDAHPEDYGLKPIDGHKWYSSVNGSYKVTNGLLFNVDETKNSDHYSVLFLDENPKEFNTLNGYGVVRFYMDLKNAPPEVYTKAKEECISAGGLYYYDAREETAYCRLPLNKEANIKASEFIHQLYEMIKSKITSEDFLKNEMVYQLPGPKVIPVKPVIGKTFEEMVKTADKYLLLGETAKEETKQETKQETGKEEEEKKETKQESQEQLFNPFAIVDEMLAEGQPAEAKQENSPQQQNPPAEAKQRQQQEENNAEAPQQRQQEENTPLKMNILTEEESNKSEEGQQPLENNIQTFGFKGDIADFFASLVKDKYIFLPILSRRSPSEYKNAKKQRTFKGEAVEEHTEIPRENMKYAEFRKKYSEIVNKYAVPFMHDGIWAILPGKEQELYKELDKLVQEAQKLGISPEEIEFMVTVLLVPKDAVVREINRQIKEIRTDIDEVKQELQNPDLKKTKIASLKKQLEQKQLRLNLLKDLYSTVTKEEIDKLAGKVKDTLYTLNQIAKYAGQQEETDETTEEEEEEEEEGNDTVKLS.

Residues 300–330 (AKEETKQETKQETGKEEEEKKETKQESQEQL) adopt a coiled-coil conformation. The segment covering 302 to 326 (EETKQETKQETGKEEEEKKETKQES) has biased composition (basic and acidic residues). Disordered regions lie at residues 302 to 329 (EETK…SQEQ), 344 to 388 (GQPA…ENTP), and 626 to 653 (AGQQ…VKLS). Residues 371–381 (EENNAEAPQQR) show a composition bias toward low complexity. Residues 505 to 649 (KEQELYKELD…EEEEEEGNDT (145 aa)) are a coiled coil. Positions 630 to 647 (EETDETTEEEEEEEEEGN) are enriched in acidic residues.

It is found in the virion. The polypeptide is Structural protein ORF653 (Acidianus two-tailed virus (ATV)).